We begin with the raw amino-acid sequence, 869 residues long: Ribonucleoside-diphosphate reductase large chain 2 (869 aa).

The ATP-cone domain maps to 1–92 (MYVIKRDGRK…ISNLHKQTTK (92 aa)). Residues 5 to 6 (KR), 11 to 17 (EPVQFDK), threonine 53, and aspartate 57 each bind ATP. 2 residues coordinate GDP: serine 202 and serine 217. Cysteine 218 and cysteine 443 are disulfide-bonded. DTTP-binding positions include 226-228 (DSI), lysine 243, arginine 256, and 263-264 (AG). Serine 227 carries the post-translational modification Phosphoserine. Residue lysine 387 forms a Glycyl lysine isopeptide (Lys-Gly) (interchain with G-Cter in ubiquitin) linkage. Position 426 (asparagine 426) interacts with GDP. Residue asparagine 426 is the Proton acceptor of the active site. The Cysteine radical intermediate role is filled by cysteine 428. GDP-binding positions include glutamate 430 and 608–611 (TAST). Glutamate 430 serves as the catalytic Proton acceptor. Residues 793-843 (SALTESSDNEKDASPVPSEQSSVSSAMSNVKLEDSVAPAVPTETIKEDSDE) form a disordered region. Phosphoserine is present on residues serine 806, serine 827, and serine 868. Low complexity predominate over residues 806–820 (SPVPSEQSSVSSAMS).

It belongs to the ribonucleoside diphosphate reductase large chain family. In terms of assembly, heterotetramer of two large (R1) and two small (R2) subunits. S.cerevisiae has two different R1 subunits (RNR1 and RNR3) and two different R2 subunits (RNR2 and RNR4). The functional form of the small subunits is a RNR2-RNR4 heterodimer, where RNR2 provides the iron-radical center and RNR4 is required for proper folding of RNR2 and assembly with the large subunits. Under normal growth conditions, the active form of the large subunits is a homodimer of the constitutively expressed RNR1. In damaged cells or cells arrested for DNA synthesis, the reductase consists of multiple species because of the association of the small subunits (RNR2-RNR4) with either the RNR1 homodimer or a heterodimer of RNR1 and the damage-inducible RNR3.

Its subcellular location is the cytoplasm. The enzyme catalyses a 2'-deoxyribonucleoside 5'-diphosphate + [thioredoxin]-disulfide + H2O = a ribonucleoside 5'-diphosphate + [thioredoxin]-dithiol. Under complex allosteric control mediated by deoxynucleoside triphosphates and ATP binding to separate specificity and activation sites on the large subunit. The type of nucleotide bound at the specificity site determines substrate preference. It seems probable that ATP makes the enzyme reduce CDP and UDP, dGTP favors ADP reduction and dTTP favors GDP reduction. Stimulated by ATP and inhibited by dATP binding to the activity site. In terms of biological role, provides the precursors necessary for DNA synthesis. Catalyzes the biosynthesis of deoxyribonucleotides from the corresponding ribonucleotides. The polypeptide is Ribonucleoside-diphosphate reductase large chain 2 (RNR3) (Saccharomyces cerevisiae (strain ATCC 204508 / S288c) (Baker's yeast)).